The sequence spans 764 residues: Zygote defective protein 12 (764 aa).

Over residues 1–20 (MLDLTNQESDSSENGNSKYA) the composition is skewed to polar residues. The disordered stretch occupies residues 1–33 (MLDLTNQESDSSENGNSKYADSTDGRGIGTSRR). Residues 1–236 (MLDLTNQESD…ESSVITNGNG (236 aa)) are interaction with dli-1. One can recognise a Calponin-homology (CH) domain in the interval 43 to 169 (RKDLADLVFW…VSLAFIGKTQ (127 aa)). Coiled coils occupy residues 244-405 (LSAN…HVKT) and 436-692 (GLES…NRLI). Residues 732 to 752 (ALPWRFGISSMLIIFMVWFFI) form a helical membrane-spanning segment.

Belongs to the hook family. Homodimer. Interacts with the dynein subunit dli-1 via its N-terminus. May interact with microtubules.

It localises to the nucleus membrane. The protein localises to the cytoplasm. Its subcellular location is the cytoskeleton. The protein resides in the microtubule organizing center. It is found in the centrosome. Its function is as follows. Cytoskeletal linker protein, which is essential for attachment of the centrosome to the nucleus. Required for dynein localization to the nuclear envelope. The polypeptide is Zygote defective protein 12 (zyg-12) (Caenorhabditis briggsae).